The sequence spans 347 residues: NADH-ubiquinone oxidoreductase chain 2 (347 aa).

Transmembrane regions (helical) follow at residues 3–23 (PIIFIIILMTVMLGTTIVMIS), 25–45 (HWLRIWIGFEMNMLAIIPIMM), 66–86 (ASMLLMMAIIINLMFSGQWTV), 96–116 (MLMTMALAMKLGMAPFHFWVP), 122–142 (IPLSSGLILLTWQKLVPMSVL), 145–165 (ILPSINLDLILTLSILSIMIG), 178–198 (IMAYSSIAHMGWMTAILPYNP), 200–220 (MMLLNLIIYITMTSTMFLLFM), 237–257 (MPIMTTLVLITLLSMGGLPPL), 274–294 (NSIILPTLMAITALLNLYFYM), and 325–345 (LLPTLTVLSTMLLPLTPILSI).

The protein belongs to the complex I subunit 2 family. Core subunit of respiratory chain NADH dehydrogenase (Complex I) which is composed of 45 different subunits. Interacts with TMEM242.

The protein localises to the mitochondrion inner membrane. It catalyses the reaction a ubiquinone + NADH + 5 H(+)(in) = a ubiquinol + NAD(+) + 4 H(+)(out). Functionally, core subunit of the mitochondrial membrane respiratory chain NADH dehydrogenase (Complex I) which catalyzes electron transfer from NADH through the respiratory chain, using ubiquinone as an electron acceptor. Essential for the catalytic activity and assembly of complex I. This Capra hircus (Goat) protein is NADH-ubiquinone oxidoreductase chain 2.